The primary structure comprises 141 residues: Protein E6 (141 aa).

Zinc fingers lie at residues 27 to 64 (CRFC…CSSC) and 101 to 137 (CQYC…CRHC).

This sequence belongs to the papillomaviridae E6 protein family. As to quaternary structure, forms homodimers. Interacts with ubiquitin-protein ligase UBE3A/E6-AP; this interaction stimulates UBE3A ubiquitin activity. Interacts with host BAK1.

The protein localises to the host cytoplasm. It localises to the host nucleus. Plays a major role in the induction and maintenance of cellular transformation. E6 associates with host UBE3A/E6-AP ubiquitin-protein ligase and modulates its activity. Protects host keratinocytes from apoptosis by mediating the degradation of host BAK1. May also inhibit host immune response. The chain is Protein E6 from Homo sapiens (Human).